The chain runs to 248 residues: 3-deoxy-manno-octulosonate cytidylyltransferase (248 aa).

Belongs to the KdsB family.

The protein resides in the cytoplasm. The catalysed reaction is 3-deoxy-alpha-D-manno-oct-2-ulosonate + CTP = CMP-3-deoxy-beta-D-manno-octulosonate + diphosphate. The protein operates within nucleotide-sugar biosynthesis; CMP-3-deoxy-D-manno-octulosonate biosynthesis; CMP-3-deoxy-D-manno-octulosonate from 3-deoxy-D-manno-octulosonate and CTP: step 1/1. It participates in bacterial outer membrane biogenesis; lipopolysaccharide biosynthesis. Activates KDO (a required 8-carbon sugar) for incorporation into bacterial lipopolysaccharide in Gram-negative bacteria. The sequence is that of 3-deoxy-manno-octulosonate cytidylyltransferase from Christiangramia forsetii (strain DSM 17595 / CGMCC 1.15422 / KT0803) (Gramella forsetii).